A 294-amino-acid chain; its full sequence is Aquaporin NIP2-2 (294 aa).

The next 2 membrane-spanning stretches (helical) occupy residues 54–74 (VISE…AASI) and 88–108 (SVAG…ISGA). Positions 111–113 (NPA) match the NPA 1 motif. 3 helical membrane passes run 129-151 (VPFY…KAVL), 169-189 (ALLI…AVAT), and 197-217 (LAGL…GPVS). Positions 222-224 (NPA) match the NPA 2 motif. The helical transmembrane segment at 235 to 255 (VFTGLWIYFLGPVIGTLSGAW) threads the bilayer.

The protein belongs to the MIP/aquaporin (TC 1.A.8) family. NIP (TC 1.A.8.12) subfamily.

It localises to the membrane. In terms of biological role, aquaporins facilitate the transport of water and small neutral solutes across cell membranes. The chain is Aquaporin NIP2-2 (NIP2-2) from Zea mays (Maize).